Reading from the N-terminus, the 177-residue chain is Protein GrpE (177 aa).

The protein belongs to the GrpE family. Homodimer.

Its subcellular location is the cytoplasm. Its function is as follows. Participates actively in the response to hyperosmotic and heat shock by preventing the aggregation of stress-denatured proteins, in association with DnaK and GrpE. It is the nucleotide exchange factor for DnaK and may function as a thermosensor. Unfolded proteins bind initially to DnaJ; upon interaction with the DnaJ-bound protein, DnaK hydrolyzes its bound ATP, resulting in the formation of a stable complex. GrpE releases ADP from DnaK; ATP binding to DnaK triggers the release of the substrate protein, thus completing the reaction cycle. Several rounds of ATP-dependent interactions between DnaJ, DnaK and GrpE are required for fully efficient folding. This is Protein GrpE from Thermus thermophilus (strain ATCC BAA-163 / DSM 7039 / HB27).